The chain runs to 276 residues: Undecaprenyl-diphosphatase 2 (276 aa).

The next 8 membrane-spanning stretches (helical) occupy residues 4–24, 44–64, 87–107, 114–134, 150–170, 193–213, 225–245, and 256–276; these read IEAL…VSSL, DFLP…LIYF, ARLM…GLLL, LFAS…LLLW, LSFA…LPGF, FSFL…IPKL, LLLA…WFLM, and LRPF…FKLV.

It belongs to the UppP family.

It is found in the cell inner membrane. The catalysed reaction is di-trans,octa-cis-undecaprenyl diphosphate + H2O = di-trans,octa-cis-undecaprenyl phosphate + phosphate + H(+). Catalyzes the dephosphorylation of undecaprenyl diphosphate (UPP). Confers resistance to bacitracin. This is Undecaprenyl-diphosphatase 2 from Chromobacterium violaceum (strain ATCC 12472 / DSM 30191 / JCM 1249 / CCUG 213 / NBRC 12614 / NCIMB 9131 / NCTC 9757 / MK).